The following is a 163-amino-acid chain: PTS system fructose-specific EIIB component (163 aa).

The region spanning 1–163 (MMNIVLARID…FVQILRNVTK (163 aa)) is the PTS EIIB type-4 domain. The Pros-phosphohistidine intermediate role is filled by His-15. Position 15 is a phosphohistidine; by EIIA (His-15).

Its subcellular location is the cytoplasm. The catalysed reaction is D-fructose(out) + N(pros)-phospho-L-histidyl-[protein] = D-fructose 1-phosphate(in) + L-histidyl-[protein]. In terms of biological role, the phosphoenolpyruvate-dependent sugar phosphotransferase system (sugar PTS), a major carbohydrate active -transport system, catalyzes the phosphorylation of incoming sugar substrates concomitantly with their translocation across the cell membrane. The enzyme II LevDE PTS system is involved in fructose transport. Its function is as follows. LevD and LevE act as negative regulators of the levanase operon. They may be involved in a PTS-mediated phosphorylation of a regulator. The sequence is that of PTS system fructose-specific EIIB component from Bacillus subtilis (strain 168).